Consider the following 401-residue polypeptide: tRNA-specific 2-thiouridylase MnmA (401 aa).

ATP contacts are provided by residues 13-20 and methionine 39; that span reads GLSGGVDS. The tract at residues 99–101 is interaction with target base in tRNA; it reads NPD. The active-site Nucleophile is cysteine 104. Cysteine 104 and cysteine 202 are oxidised to a cystine. Glycine 128 contacts ATP. The interval 152–154 is interaction with tRNA; sequence KDQ. Catalysis depends on cysteine 202, which acts as the Cysteine persulfide intermediate. The tract at residues 329–330 is interaction with tRNA; it reads RY.

The protein belongs to the MnmA/TRMU family.

The protein localises to the cytoplasm. It catalyses the reaction S-sulfanyl-L-cysteinyl-[protein] + uridine(34) in tRNA + AH2 + ATP = 2-thiouridine(34) in tRNA + L-cysteinyl-[protein] + A + AMP + diphosphate + H(+). Functionally, catalyzes the 2-thiolation of uridine at the wobble position (U34) of tRNA, leading to the formation of s(2)U34. In Polaromonas sp. (strain JS666 / ATCC BAA-500), this protein is tRNA-specific 2-thiouridylase MnmA.